Here is a 343-residue protein sequence, read N- to C-terminus: Ricin B-like lectin R40G2 (343 aa).

Residues 194-340 enclose the Ricin B-type lectin domain; sequence TVRVFSAAGE…CEGDNQRWKI (147 aa).

In terms of biological role, lectin which binds carbohydrates in vitro. Interacts through its lectin domain with glycan structures containing specific motifs. The sequence is that of Ricin B-like lectin R40G2 from Oryza sativa subsp. japonica (Rice).